A 404-amino-acid polypeptide reads, in one-letter code: Putative CBL-interacting protein kinase 27 (404 aa).

Positions 11 to 266 constitute a Protein kinase domain; it reads YEMGRVLGHG…VAGLLETPWF (256 aa). ATP contacts are provided by residues 17 to 25 and K40; that span reads LGHGNFGRV. The Proton acceptor role is filled by D134. An activation loop region spans residues 152-181; sequence DFGLSALACHARPDGLLHTACGTPAYVAPE. In terms of domain architecture, NAF spans 294–321; that stretch reads DKDEPPEVLNAFHLISLSEGFDLSPLFE. Residues 335-356 form a PPI region; sequence AGGTRFATREAASGVVARLEAL.

It belongs to the protein kinase superfamily. CAMK Ser/Thr protein kinase family. SNF1 subfamily. The cofactor is Mn(2+).

It catalyses the reaction L-seryl-[protein] + ATP = O-phospho-L-seryl-[protein] + ADP + H(+). It carries out the reaction L-threonyl-[protein] + ATP = O-phospho-L-threonyl-[protein] + ADP + H(+). CIPK serine-threonine protein kinases interact with CBL proteins. Binding of a CBL protein to the regulatory NAF domain of CIPK protein lead to the activation of the kinase in a calcium-dependent manner. The chain is Putative CBL-interacting protein kinase 27 (CIPK27) from Oryza sativa subsp. japonica (Rice).